Reading from the N-terminus, the 349-residue chain is Tetraacyldisaccharide 4'-kinase (349 aa).

Position 58–65 (58–65 (TAGGSGKT)) interacts with ATP.

The protein belongs to the LpxK family.

The catalysed reaction is a lipid A disaccharide + ATP = a lipid IVA + ADP + H(+). The protein operates within glycolipid biosynthesis; lipid IV(A) biosynthesis; lipid IV(A) from (3R)-3-hydroxytetradecanoyl-[acyl-carrier-protein] and UDP-N-acetyl-alpha-D-glucosamine: step 6/6. In terms of biological role, transfers the gamma-phosphate of ATP to the 4'-position of a tetraacyldisaccharide 1-phosphate intermediate (termed DS-1-P) to form tetraacyldisaccharide 1,4'-bis-phosphate (lipid IVA). The sequence is that of Tetraacyldisaccharide 4'-kinase from Shewanella amazonensis (strain ATCC BAA-1098 / SB2B).